A 220-amino-acid polypeptide reads, in one-letter code: UPF0502 protein CV_4303 (220 aa).

Belongs to the UPF0502 family.

The chain is UPF0502 protein CV_4303 from Chromobacterium violaceum (strain ATCC 12472 / DSM 30191 / JCM 1249 / CCUG 213 / NBRC 12614 / NCIMB 9131 / NCTC 9757 / MK).